Consider the following 142-residue polypeptide: Large ribosomal subunit protein uL11 (142 aa).

This sequence belongs to the universal ribosomal protein uL11 family. Part of the ribosomal stalk of the 50S ribosomal subunit. Interacts with L10 and the large rRNA to form the base of the stalk. L10 forms an elongated spine to which L12 dimers bind in a sequential fashion forming a multimeric L10(L12)X complex. Post-translationally, one or more lysine residues are methylated.

Forms part of the ribosomal stalk which helps the ribosome interact with GTP-bound translation factors. This chain is Large ribosomal subunit protein uL11, found in Erwinia tasmaniensis (strain DSM 17950 / CFBP 7177 / CIP 109463 / NCPPB 4357 / Et1/99).